A 469-amino-acid chain; its full sequence is MDKNDYLHFERNPSLFPKSTLDKVQKTKKYIEHYYKVAVDHAVERNQRRINLEQRLATERGSEERKNRQLRASGEKESQFLRFRRTRLSLEDFSTIKVIGKGAFGEVRLVQKLDTGKIYAMKSLLKTEMFKRDQLAHVKAERDLLVESDSPWVVSLYYAFQDSLYLYLIMEFLPGGDLMTMLINYDTFSEDVTRFYMAECVLAIADVHRMGYIHRDIKPDNILIDRDGHIKLSDFGLSTGFYKQDQSASYMKPRTGNTVKRGQMVDAIWLTMSSKDKMATWKKNRRVMAYSTVGTPDYIAPEIFLQQGYGQDCDWWSLGAIMFECLIGWPPFCSENSHETYRKIINWRETLTFPNDIHLSIEARDLMDRLMTDSEHRLGRGGAIEIMQHPFFTGIDWDHIRETAAPFIPNLKSITDTHYFPVDELEQVPEQPVTQQPASVDPQTLEQTNLAFLGYTYKKFNYLTMKGAL.

A Protein kinase domain is found at 93–392 (FSTIKVIGKG…AIEIMQHPFF (300 aa)). Residues 99–107 (IGKGAFGEV) and Lys-122 each bind ATP. Asp-216 (proton acceptor) is an active-site residue. An AGC-kinase C-terminal domain is found at 393 to 467 (TGIDWDHIRE…KKFNYLTMKG (75 aa)).

This sequence belongs to the protein kinase superfamily. Ser/Thr protein kinase family. In terms of assembly, interacts with mob2.

It carries out the reaction L-seryl-[protein] + ATP = O-phospho-L-seryl-[protein] + ADP + H(+). The catalysed reaction is L-threonyl-[protein] + ATP = O-phospho-L-threonyl-[protein] + ADP + H(+). In terms of biological role, interacts with pak1/shk1 and coordinates cell morphogenesis with the cell cycle. It is essential for maintenance of cell polarity and is involved in mitotic control. This Schizosaccharomyces pombe (strain 972 / ATCC 24843) (Fission yeast) protein is Serine/threonine-protein kinase orb6 (orb6).